The sequence spans 463 residues: Membrane-bound lytic murein transglycosylase F (463 aa).

The signal sequence occupies residues 1–33 (MQSQDYKKRLKLQIIIILSIAVMSCGVPNVPTA). Residues 34-272 (LSSLLERESI…VLEDKYFGHI (239 aa)) are non-LT domain. Positions 273–463 (RQFDYVDSRA…LVWLDEQGKI (191 aa)) are LT domain. The active site involves glutamate 317.

In the N-terminal section; belongs to the bacterial solute-binding protein 3 family. It in the C-terminal section; belongs to the transglycosylase Slt family.

The protein resides in the cell outer membrane. It catalyses the reaction Exolytic cleavage of the (1-&gt;4)-beta-glycosidic linkage between N-acetylmuramic acid (MurNAc) and N-acetylglucosamine (GlcNAc) residues in peptidoglycan, from either the reducing or the non-reducing ends of the peptidoglycan chains, with concomitant formation of a 1,6-anhydrobond in the MurNAc residue.. Murein-degrading enzyme that degrades murein glycan strands and insoluble, high-molecular weight murein sacculi, with the concomitant formation of a 1,6-anhydromuramoyl product. Lytic transglycosylases (LTs) play an integral role in the metabolism of the peptidoglycan (PG) sacculus. Their lytic action creates space within the PG sacculus to allow for its expansion as well as for the insertion of various structures such as secretion systems and flagella. The polypeptide is Membrane-bound lytic murein transglycosylase F (Alteromonas mediterranea (strain DSM 17117 / CIP 110805 / LMG 28347 / Deep ecotype)).